The chain runs to 300 residues: Protein Bel-1 (300 aa).

The interval 1 to 50 (MDSYEKEESVASTSGIQDLQTLSELVGPENAGEGELTIAEEPEENPRRPR) is disordered. Over residues 10 to 23 (VASTSGIQDLQTLS) the composition is skewed to polar residues. The DNA-binding element occupies 89–200 (SKSLCKRLIL…SEGPKPRPRH (112 aa)). The tract at residues 209-244 (FEKHHKPRQKRPRRRSIDNESCASSSDTMANEPGSL) is disordered. Over residues 211 to 222 (KHHKPRQKRPRR) the composition is skewed to basic residues. The Nuclear localization signal motif lies at 214–223 (KPRQKRPRRR). Residues 224–300 (SIDNESCASS…PSGSGEHSVL (77 aa)) form a transactivation domain region. Polar residues predominate over residues 227–237 (NESCASSSDTM).

As to quaternary structure, homodimer or homomultimer. Forms complexes with the host nuclear factors NFIA, NFIB, NFIC or NFIX.

It localises to the host nucleus. Functionally, transcriptional transactivator that activates the viral internal promoter (IP), thereby enhancing its own expression. This transactivation is repressed by nuclear factor I. Also transactivates the long terminal repeat (LTR) promoter, thereby inducing structural gene expression, initiating the late phase of infection. It is therefore a key regulator of viral gene expression. It directly binds to and activates DNA target sites of viral promoters and those of distinct cellular genes. Required for viral replication. This is Protein Bel-1 (bel1) from Human spumaretrovirus (SFVcpz(hu)).